The following is a 271-amino-acid chain: Putative pyruvate, phosphate dikinase regulatory protein 2 (271 aa).

151 to 158 contributes to the ADP binding site; the sequence is GVSRTSKT.

The protein belongs to the pyruvate, phosphate/water dikinase regulatory protein family. PDRP subfamily.

It catalyses the reaction N(tele)-phospho-L-histidyl/L-threonyl-[pyruvate, phosphate dikinase] + ADP = N(tele)-phospho-L-histidyl/O-phospho-L-threonyl-[pyruvate, phosphate dikinase] + AMP + H(+). It carries out the reaction N(tele)-phospho-L-histidyl/O-phospho-L-threonyl-[pyruvate, phosphate dikinase] + phosphate + H(+) = N(tele)-phospho-L-histidyl/L-threonyl-[pyruvate, phosphate dikinase] + diphosphate. Bifunctional serine/threonine kinase and phosphorylase involved in the regulation of the pyruvate, phosphate dikinase (PPDK) by catalyzing its phosphorylation/dephosphorylation. This chain is Putative pyruvate, phosphate dikinase regulatory protein 2, found in Staphylococcus haemolyticus (strain JCSC1435).